The sequence spans 475 residues: Ribulose bisphosphate carboxylase large chain (475 aa).

Lys14 is subject to N6,N6,N6-trimethyllysine. The substrate site is built by Asn123 and Thr173. The active-site Proton acceptor is Lys175. Residue Lys177 coordinates substrate. Mg(2+)-binding residues include Lys201, Asp203, and Glu204. Lys201 carries the post-translational modification N6-carboxylysine. The active-site Proton acceptor is the His294. Residues Arg295, His327, and Ser379 each coordinate substrate.

Belongs to the RuBisCO large chain family. Type I subfamily. Heterohexadecamer of 8 large chains and 8 small chains; disulfide-linked. The disulfide link is formed within the large subunit homodimers. It depends on Mg(2+) as a cofactor. The disulfide bond which can form in the large chain dimeric partners within the hexadecamer appears to be associated with oxidative stress and protein turnover.

The protein resides in the plastid. Its subcellular location is the chloroplast. It carries out the reaction 2 (2R)-3-phosphoglycerate + 2 H(+) = D-ribulose 1,5-bisphosphate + CO2 + H2O. The catalysed reaction is D-ribulose 1,5-bisphosphate + O2 = 2-phosphoglycolate + (2R)-3-phosphoglycerate + 2 H(+). Its function is as follows. RuBisCO catalyzes two reactions: the carboxylation of D-ribulose 1,5-bisphosphate, the primary event in carbon dioxide fixation, as well as the oxidative fragmentation of the pentose substrate in the photorespiration process. Both reactions occur simultaneously and in competition at the same active site. The chain is Ribulose bisphosphate carboxylase large chain from Actinidia chinensis (Kiwi).